The sequence spans 504 residues: MQDHQHVPIDIQTSKLLDWLVDRRHCNLKWQSLVLTIREKINTAIQDMPESQEIAQLLSGSYIHYFHCLRIVDLLKGTEASTKNIFGRYSSQRMKDWQEIISLYEKDNTYLVELSSLLVRNVNYEIPSLKKQIAKCQQLQQDYSRKEEEGQAGAAEMREQFYHSCKQYGITGDNVRRELLALVKDLPSQLAEIGAGAQSLGEAIDLYQACVEFVCDSPTEQVLPMLRYVQPKGNSTVYEWRTGTEPSVVERPQLEDPPEQVQEDEIDWGDFGLEAVSDSGNIISAETPGIDWGISLESESKDAGADKIDWGDNAVASEITVLETGTEAPEGVARGSDALTLLEYPETRNQFIDELMELEIFLSQRAVEMSEEADILSVSQFQLAPAILQGQTKEKMLSLVSTLQHLIGQLTSLDLQHLFMILASPRYVDRVTELLQQKLKQSQLLALKKDLMVEKQQEALQEQAALEPKLDLLLEKTRELQKLIEADISKRYNGRPVNLMGTSV.

Short sequence motifs (shuffled ATG8-binding motif) lie at residues 266–269 (IDWG), 290–293 (IDWG), and 308–311 (IDWG). The required for interaction with UFL1 and mediates interaction with CHEK1 stretch occupies residues 268–504 (WGDFGLEAVS…RPVNLMGTSV (237 aa)). The segment at 353–368 (DELMELEIFLSQRAVE) is RPL10a-binding domain (RBD). Lys-448 participates in a covalent cross-link: Glycyl lysine isopeptide (Lys-Gly) (interchain with G-Cter in SUMO2).

It belongs to the CDK5RAP3 family. As to quaternary structure, substrate adapter component of the UFM1 ribosome E3 ligase (UREL) complex, composed of UFL1, DDRGK1 and CDK5RAP3. Interaction with UFL1 anchors CDK5RAP3 in the cytoplasm, preventing its translocation to the nucleus which allows expression of the CCND1 cyclin and progression of cells through the G1/S transition. Interacts with ATG8 family proteins MAP1LC3A, MAP1LC3B, GABARAP, GABARAPL1 and GABARAPL2. Interacts with CDK5R1; competes with CDK5RAP1 and CDK5RAP2. Interacts with RELA. Interacts with CHEK1; may negatively regulate CHEK1 and thereby stimulate entry into mitosis. Interacts with CDKN2A/ARF and MDM2; forms a ternary complex involved in regulation of p53/TP53. Interacts with MAPK14. Interacts with CCNB1. Interacts with TUBG1; may regulate CDK5RAP3 in mitotic G2/M transition checkpoint. Post-translationally, may be phosphorylated by CDK5. Ubiquitinated. Probably triggers proteasomal degradation and is negatively regulated by UFL1. In terms of processing, may be ufmylated. Post-translationally, cleaved by caspases early during apoptosis, the resulting peptides may play a role in rupture of the nuclear envelope. As to expression, expressed in vascular endothelium. Up-regulated in failing heart. Highly expressed in the ventricular section in subacute and chronic ischemic heart failure.

It localises to the endoplasmic reticulum membrane. Its subcellular location is the cytoplasm. The protein resides in the nucleus. It is found in the cytoskeleton. The protein localises to the microtubule organizing center. It localises to the centrosome. In terms of biological role, substrate adapter of E3 ligase complexes mediating ufmylation, the covalent attachment of the ubiquitin-like modifier UFM1 to substrate proteins, and which is involved in various processes, such as ribosome recycling and reticulophagy (also called ER-phagy). As part of the UREL complex, plays a key role in ribosome recycling by promoting mono-ufmylation of RPL26/uL24 subunit of the 60S ribosome. Ufmylation of RPL26/uL24 occurs on free 60S ribosomes following ribosome dissociation: it weakens the junction between post-termination 60S subunits and SEC61 translocons, promoting release and recycling of the large ribosomal subunit from the endoplasmic reticulum membrane. Ufmylation of RPL26/uL24 and subsequent 60S ribosome recycling either take place after normal termination of translation or after ribosome stalling during cotranslational translocation at the endoplasmic reticulum. Within the UREL complex, CDK5RAP3 acts as a substrate adapter that constrains UFL1 ligase activity to mono-ufmylate RPL26/uL24 at 'Lys-134'. The UREL complex is also involved in reticulophagy in response to endoplasmic reticulum stress by promoting ufmylation of proteins such as CYB5R3, thereby promoting lysosomal degradation of ufmylated proteins. Also acts as a regulator of transcription: negatively regulates NF-kappa-B-mediated gene transcription through the control of RELA phosphorylation. Also regulates mitotic G2/M transition checkpoint and mitotic G2 DNA damage checkpoint. Through its interaction with CDKN2A/ARF and MDM2 may induce MDM2-dependent p53/TP53 ubiquitination, stabilization and activation in the nucleus, thereby promoting G1 cell cycle arrest and inhibition of cell proliferation. May also play a role in the rupture of the nuclear envelope during apoptosis. May regulate MAPK14 activity by regulating its dephosphorylation by PPM1D/WIP1. Required for liver development. This Rattus norvegicus (Rat) protein is CDK5 regulatory subunit-associated protein 3.